We begin with the raw amino-acid sequence, 393 residues long: MNRNTTTNKNANLNNSRNANAPGEAGHQNKTGLIYWTNPSKSGASFAATLVSLLILRNVNVISVLLKIGYMVLFTSFAVELSTKVLFDKGVVSRFGMQESPDLVGVLKPHIDRELDRLPALEDRIRKLVFAHRTRNNFTIGVSLYFLHGLFAIFSMNTVLIMTTIFLYTVPLIYDRKQARIDRAIDRMKDLVIHRFHKNYNKVVEKTEPYIDKIIPPQTDEGSYSTSISNENKSSTSQRNKSGLSSSEFDNMNDTSASKSGKDSYSTSQYNRAEYPVSQNENIGTLKSGKQEIPTEKDFNNRHENFSKPDVKTYDPRTVDIEEELAAHQRELEQNLKDGDYNLVGSKEIPDPITVPAPTRHTTKPAESQSIPIKNNETLHKTTHGLKQKLQHA.

Over residues M1–A21 the composition is skewed to low complexity. The disordered stretch occupies residues M1–A25. The Cytoplasmic portion of the chain corresponds to M1–N60. Residues K30 to T236 form the Reticulon domain. A helical membrane pass occupies residues V61–L81. Residues S82 to G149 lie on the Lumenal side of the membrane. N137 carries an N-linked (GlcNAc...) asparagine glycan. A helical membrane pass occupies residues L150–V170. The Cytoplasmic portion of the chain corresponds to P171–A393. 2 disordered regions span residues I214–T313 and G339–A393. The segment covering D220 to T285 has biased composition (polar residues). S278 carries the post-translational modification Phosphoserine. Over residues G289 to T313 the composition is skewed to basic and acidic residues. The span at P365–N376 shows a compositional bias: polar residues. Basic residues predominate over residues K381 to A393.

Its subcellular location is the endoplasmic reticulum membrane. This Saccharomyces cerevisiae (strain ATCC 204508 / S288c) (Baker's yeast) protein is Reticulon-like protein 2 (RTN2).